The following is a 139-amino-acid chain: Endoribonuclease YbeY (139 aa).

Positions 99, 103, and 109 each coordinate Zn(2+).

This sequence belongs to the endoribonuclease YbeY family. It depends on Zn(2+) as a cofactor.

The protein resides in the cytoplasm. In terms of biological role, single strand-specific metallo-endoribonuclease involved in late-stage 70S ribosome quality control and in maturation of the 3' terminus of the 16S rRNA. This is Endoribonuclease YbeY from Sulfurimonas denitrificans (strain ATCC 33889 / DSM 1251) (Thiomicrospira denitrificans (strain ATCC 33889 / DSM 1251)).